Here is a 386-residue protein sequence, read N- to C-terminus: F420 non-reducing hydrogenase I small subunit (386 aa).

A signal peptide (tat-type signal) is located at residues methionine 1–alanine 51. 8 residues coordinate [4Fe-4S] cluster: cysteine 67, cysteine 70, cysteine 178, cysteine 227, histidine 273, cysteine 276, cysteine 296, and cysteine 302. [3Fe-4S] cluster is bound by residues cysteine 311, cysteine 330, and cysteine 333.

This sequence belongs to the [NiFe]/[NiFeSe] hydrogenase small subunit family. As to quaternary structure, composed of a large subunit (VhoA), a small subunit (VhoG) and a cytochrome subunit (VhoC). Requires [4Fe-4S] cluster as cofactor. [3Fe-4S] cluster is required as a cofactor. In terms of processing, predicted to be exported by the Tat system. The position of the signal peptide cleavage has not been experimentally proven.

The protein localises to the cell membrane. It catalyses the reaction methanophenazine + H2 = dihydromethanophenazine. Part of the F420 non-reducing hydrogenase I complex that catalyzes the reduction of methanophenazine to dihydromethanophenazine. This Methanosarcina mazei (strain ATCC BAA-159 / DSM 3647 / Goe1 / Go1 / JCM 11833 / OCM 88) (Methanosarcina frisia) protein is F420 non-reducing hydrogenase I small subunit.